A 229-amino-acid chain; its full sequence is Potassium/proton antiporter CemA (229 aa).

3 helical membrane passes run Leu7 to Phe27, Leu106 to Leu126, and Leu193 to Leu213.

The protein belongs to the CemA family.

Its subcellular location is the plastid. The protein resides in the chloroplast inner membrane. The catalysed reaction is K(+)(in) + H(+)(out) = K(+)(out) + H(+)(in). Functionally, contributes to K(+)/H(+) antiport activity by supporting proton efflux to control proton extrusion and homeostasis in chloroplasts in a light-dependent manner to modulate photosynthesis. Prevents excessive induction of non-photochemical quenching (NPQ) under continuous-light conditions. Indirectly promotes efficient inorganic carbon uptake into chloroplasts. In Illicium oligandrum (Star anise), this protein is Potassium/proton antiporter CemA.